Consider the following 280-residue polypeptide: 4-deoxy-L-threo-5-hexosulose-uronate ketol-isomerase 1 (280 aa).

Zn(2+) is bound by residues histidine 198, histidine 200, glutamate 205, and histidine 247.

It belongs to the KduI family. Zn(2+) is required as a cofactor.

The enzyme catalyses 5-dehydro-4-deoxy-D-glucuronate = 3-deoxy-D-glycero-2,5-hexodiulosonate. Its pathway is glycan metabolism; pectin degradation; 2-dehydro-3-deoxy-D-gluconate from pectin: step 4/5. Its function is as follows. Catalyzes the isomerization of 5-dehydro-4-deoxy-D-glucuronate to 3-deoxy-D-glycero-2,5-hexodiulosonate. The polypeptide is 4-deoxy-L-threo-5-hexosulose-uronate ketol-isomerase 1 (kduI1) (Rhizobium meliloti (strain 1021) (Ensifer meliloti)).